The sequence spans 63 residues: Large ribosomal subunit protein bL28 (63 aa).

It belongs to the bacterial ribosomal protein bL28 family.

The sequence is that of Large ribosomal subunit protein bL28 from Clostridium novyi (strain NT).